The following is a 430-amino-acid chain: Mitochondrial distribution and morphology protein 10 (430 aa).

Residues 215 to 234 (SSSAMNPPSGTSASETNGSG) show a composition bias toward polar residues. 2 disordered regions span residues 215–237 (SSSA…GPSV) and 339–393 (LGAN…GPKE).

This sequence belongs to the MDM10 family. Component of the ER-mitochondria encounter structure (ERMES) or MDM complex, composed of MMM1, MDM10, MDM12 and MDM34. Associates with the mitochondrial outer membrane sorting assembly machinery SAM(core) complex.

The protein resides in the mitochondrion outer membrane. Functionally, component of the ERMES/MDM complex, which serves as a molecular tether to connect the endoplasmic reticulum and mitochondria. Components of this complex are involved in the control of mitochondrial shape and protein biogenesis and may function in phospholipid exchange. MDM10 is involved in the late assembly steps of the general translocase of the mitochondrial outer membrane (TOM complex). Functions in the TOM40-specific route of the assembly of outer membrane beta-barrel proteins, including the association of TOM40 with the receptor TOM22 and small TOM proteins. Can associate with the SAM(core) complex as well as the MDM12-MMM1 complex, both involved in late steps of the major beta-barrel assembly pathway, that is responsible for biogenesis of all outer membrane beta-barrel proteins. May act as a switch that shuttles between both complexes and channels precursor proteins into the TOM40-specific pathway. Plays a role in mitochondrial morphology and in the inheritance of mitochondria. The polypeptide is Mitochondrial distribution and morphology protein 10 (Chaetomium globosum (strain ATCC 6205 / CBS 148.51 / DSM 1962 / NBRC 6347 / NRRL 1970) (Soil fungus)).